A 266-amino-acid polypeptide reads, in one-letter code: Undecaprenyl-diphosphatase (266 aa).

8 consecutive transmembrane segments (helical) span residues Met-1 to Ile-21, Phe-43 to Ile-63, Ser-83 to Phe-103, Val-114 to Phe-134, Thr-144 to Gly-164, Ile-186 to Ile-206, Leu-219 to Ile-239, and Val-245 to Ile-265.

It belongs to the UppP family.

Its subcellular location is the cell inner membrane. It catalyses the reaction di-trans,octa-cis-undecaprenyl diphosphate + H2O = di-trans,octa-cis-undecaprenyl phosphate + phosphate + H(+). In terms of biological role, catalyzes the dephosphorylation of undecaprenyl diphosphate (UPP). Confers resistance to bacitracin. In Ruthia magnifica subsp. Calyptogena magnifica, this protein is Undecaprenyl-diphosphatase.